A 643-amino-acid polypeptide reads, in one-letter code: Probable potassium transport system protein Kup (643 aa).

Over residues 1–12 (MSISSKTEDSDI) the composition is skewed to basic and acidic residues. The interval 1-20 (MSISSKTEDSDIRSSVMTDH) is disordered. 12 helical membrane passes run 28-48 (LAGLSLAALGVVFGDIGTSPL), 65-85 (AGNVLGVLSLLFWALVLIVGL), 121-141 (WLLVAIGLFGASLLYGDGMIT), 158-178 (PAFHEMVIPLTMLVLAGLFLF), 187-207 (GALFGPIILLWFIAIAILGII), 224-244 (GISFLLGNNLKGFTVLGAVFL), 268-288 (WFLLVLPALLLNYFGQGALLL), 301-321 (LVPSWAMIPMVLLATSATIIA), 358-378 (IYVPAANWSLMVGTIGIVAWF), 384-404 (LAAAYGVAVTATMLISTILFY), 415-435 (PAALNVMITFFAAIDLSFFGA), and 440-460 (LFHGAWVPLAVALVMFTIMNT).

It belongs to the HAK/KUP transporter (TC 2.A.72) family.

It is found in the cell inner membrane. The catalysed reaction is K(+)(in) + H(+)(in) = K(+)(out) + H(+)(out). In terms of biological role, transport of potassium into the cell. Likely operates as a K(+):H(+) symporter. This is Probable potassium transport system protein Kup from Chlorobium luteolum (strain DSM 273 / BCRC 81028 / 2530) (Pelodictyon luteolum).